The following is a 429-amino-acid chain: Glutamate-1-semialdehyde 2,1-aminomutase 1 (429 aa).

Position 268 is an N6-(pyridoxal phosphate)lysine (lysine 268).

This sequence belongs to the class-III pyridoxal-phosphate-dependent aminotransferase family. HemL subfamily. As to quaternary structure, homodimer. It depends on pyridoxal 5'-phosphate as a cofactor.

The protein resides in the cytoplasm. The enzyme catalyses (S)-4-amino-5-oxopentanoate = 5-aminolevulinate. It participates in porphyrin-containing compound metabolism; protoporphyrin-IX biosynthesis; 5-aminolevulinate from L-glutamyl-tRNA(Glu): step 2/2. The sequence is that of Glutamate-1-semialdehyde 2,1-aminomutase 1 from Listeria monocytogenes serotype 4b (strain F2365).